We begin with the raw amino-acid sequence, 306 residues long: Curved DNA-binding protein (306 aa).

The region spanning 5–69 (DYYAIMGVKP…QRRAEYDQLW (65 aa)) is the J domain.

It is found in the cytoplasm. The protein localises to the nucleoid. Functionally, DNA-binding protein that preferentially recognizes a curved DNA sequence. It is probably a functional analog of DnaJ; displays overlapping activities with DnaJ, but functions under different conditions, probably acting as a molecular chaperone in an adaptive response to environmental stresses other than heat shock. Lacks autonomous chaperone activity; binds native substrates and targets them for recognition by DnaK. Its activity is inhibited by the binding of CbpM. This is Curved DNA-binding protein from Salmonella choleraesuis (strain SC-B67).